We begin with the raw amino-acid sequence, 488 residues long: Facilitated trehalose transporter Tret1-2 homolog (488 aa).

Residues 1–28 (MKILMRADTHVSYSVPAEGTKANFTFSQ) are Cytoplasmic-facing. The chain crosses the membrane as a helical span at residues 29–49 (VLAALSVSLCSLVVGFVSAYT). The Extracellular portion of the chain corresponds to 50 to 72 (SPALVSMTDRTITSFEVTKDAGS). A helical membrane pass occupies residues 73–93 (WVGGIMPLAALAGGITGGPLI). Residues 94 to 105 (EYLGRRNTILAT) are Cytoplasmic-facing. A helical transmembrane segment spans residues 106-126 (AVPFIVSSLLIACAVNVIMIL). Residues 127–129 (CGR) are Extracellular-facing. Residues 130-150 (FLTGFCVGIASLSLPVYLGET) form a helical membrane-spanning segment. Residues 151 to 160 (LQPEVRGTLG) lie on the Cytoplasmic side of the membrane. The helical transmembrane segment at 161-181 (LLPTALGNIGILVCYVAGSFM) threads the bilayer. N-linked (GlcNAc...) asparagine glycosylation occurs at asparagine 182. The Extracellular portion of the chain corresponds to 182–184 (NWS). Residues 185 to 205 (ILAFLGAALPVPFLILMIIIP) form a helical membrane-spanning segment. Residues 206–268 (ETPRWFVNRG…ELFKRINLKP (63 aa)) lie on the Cytoplasmic side of the membrane. A helical membrane pass occupies residues 269-289 (LSISLGLMFFQQFSGINAVIF). The Extracellular portion of the chain corresponds to 290 to 305 (YTVQIFKDAGSTIDSN). Residues 306-326 (LCTIIVGIVNFFATFMGIILI) traverse the membrane as a helical segment. At 327–332 (DRLGRK) the chain is on the cytoplasmic side. A helical transmembrane segment spans residues 333 to 353 (ILLYVSDIAMILTLSILGGFF). Residues 354-372 (YCKAHGPDVSHLGWLPLSC) are Extracellular-facing. The helical transmembrane segment at 373–393 (FVIYILGFSLGFGPIPWLMMG) threads the bilayer. Residues 394-402 (EILPAKIRG) are Cytoplasmic-facing. The chain crosses the membrane as a helical span at residues 403-423 (PAASVVTAFNWFCTFVVTKTF). Residues 424 to 433 (QDLTVAMGPH) are Extracellular-facing. Residues 434-454 (GAFWLFGVVCIVGLFFVIIYV) form a helical membrane-spanning segment. Residues 455 to 488 (PETRGKSLEEIERKMMGRVPISAVVNIKPFSFNM) lie on the Cytoplasmic side of the membrane.

The protein belongs to the major facilitator superfamily. Sugar transporter (TC 2.A.1.1) family. Trehalose transporter subfamily.

It localises to the cell membrane. Fails to transport trehalose. The polypeptide is Facilitated trehalose transporter Tret1-2 homolog (Drosophila sechellia (Fruit fly)).